The primary structure comprises 434 residues: GTPase Obg (434 aa).

The 159-residue stretch at Ala-4 to Leu-162 folds into the Obg domain. The 171-residue stretch at Ala-163–Lys-333 folds into the OBG-type G domain. Residues Gly-169–Ser-176, Phe-194–Ile-198, Asp-215–Gly-218, Asn-285–Asp-288, and Ser-314–Ile-316 contribute to the GTP site. Mg(2+) is bound by residues Ser-176 and Thr-196. Residues Leu-355 to Glu-434 enclose the OCT domain.

It belongs to the TRAFAC class OBG-HflX-like GTPase superfamily. OBG GTPase family. Monomer. Mg(2+) is required as a cofactor.

It is found in the cytoplasm. Functionally, an essential GTPase which binds GTP, GDP and possibly (p)ppGpp with moderate affinity, with high nucleotide exchange rates and a fairly low GTP hydrolysis rate. Plays a role in control of the cell cycle, stress response, ribosome biogenesis and in those bacteria that undergo differentiation, in morphogenesis control. The chain is GTPase Obg from Thermosipho africanus (strain TCF52B).